Reading from the N-terminus, the 373-residue chain is MTGVPGSSITLDDLPLRDDLRGKSPYGAPQLSVPVRLNTNENPHPPTRALIDDVAQSVREVAGELHRYPDRDAVALRTDLAAYLSAQTGTAVGVENVWAANGSNEILQQLLQAFGGPGRSALGFVPSYSMHPIISDGTQTRWLVANRGDDFGLDAAVAATAIKEHTPDVVFVTSPNNPSGQSVSLDDLRLLLDALCLQDGGVMIVDEAYGEFSSQPSAIGLIESYPGKLVVTRTMSKAFAFAGGRVGYLVAAPAVIDAMLLVRLPYHLSSVTQAAARAALRHADDTLGSVATLIAERERVSQALTGMGFRVIPSDANFILFGEFADAPATWQRYLDEGVLIRDVGIPGYLRTTIGLAEENDALLAASARIGAP.

The segment covering 1-10 (MTGVPGSSIT) has biased composition (polar residues). Residues 1-45 (MTGVPGSSITLDDLPLRDDLRGKSPYGAPQLSVPVRLNTNENPHP) form a disordered region. Position 237 is an N6-(pyridoxal phosphate)lysine (lysine 237).

The protein belongs to the class-II pyridoxal-phosphate-dependent aminotransferase family. Histidinol-phosphate aminotransferase subfamily. Homodimer. Pyridoxal 5'-phosphate is required as a cofactor.

The enzyme catalyses L-histidinol phosphate + 2-oxoglutarate = 3-(imidazol-4-yl)-2-oxopropyl phosphate + L-glutamate. It participates in amino-acid biosynthesis; L-histidine biosynthesis; L-histidine from 5-phospho-alpha-D-ribose 1-diphosphate: step 7/9. This Mycolicibacterium vanbaalenii (strain DSM 7251 / JCM 13017 / BCRC 16820 / KCTC 9966 / NRRL B-24157 / PYR-1) (Mycobacterium vanbaalenii) protein is Histidinol-phosphate aminotransferase.